We begin with the raw amino-acid sequence, 164 residues long: Putative pre-16S rRNA nuclease (164 aa).

Belongs to the YqgF nuclease family.

The protein localises to the cytoplasm. Functionally, could be a nuclease involved in processing of the 5'-end of pre-16S rRNA. This is Putative pre-16S rRNA nuclease from Rhizobium rhizogenes (strain K84 / ATCC BAA-868) (Agrobacterium radiobacter).